A 114-amino-acid polypeptide reads, in one-letter code: Putative movement protein (114 aa).

The helical transmembrane segment at 27 to 47 (LIGIILLVTVCLTVLWVCIML) threads the bilayer. The disordered stretch occupies residues 79–114 (RTPFEATGPERERNWEARRQSTTVNPASQPNTGSVF). The span at 86–97 (GPERERNWEARR) shows a compositional bias: basic and acidic residues. Over residues 98–114 (QSTTVNPASQPNTGSVF) the composition is skewed to polar residues.

It belongs to the nanovirus movement protein family.

It localises to the host cell membrane. Functionally, may transport viral genome to neighboring plant cells directly through plasmosdesmata, without any budding. The movement protein allows efficient cell to cell propagation, by bypassing the host cell wall barrier. This is Putative movement protein (DNA-M) from Faba bean necrotic yellows virus (isolate Egyptian EV1-93) (FBNYV).